A 154-amino-acid chain; its full sequence is Myoglobin (154 aa).

A Globin domain is found at 2 to 148; the sequence is VLSEGEWQLV…FRKDIAAKYK (147 aa). Serine 4 carries the phosphoserine modification. Histidine 65 is a nitrite binding site. Residue histidine 65 coordinates O2. A Phosphothreonine modification is found at threonine 68. Histidine 94 is a binding site for heme b.

Belongs to the globin family. As to quaternary structure, monomeric.

It is found in the cytoplasm. The protein localises to the sarcoplasm. It carries out the reaction Fe(III)-heme b-[protein] + nitric oxide + H2O = Fe(II)-heme b-[protein] + nitrite + 2 H(+). It catalyses the reaction H2O2 + AH2 = A + 2 H2O. In terms of biological role, monomeric heme protein which primary function is to store oxygen and facilitate its diffusion within muscle tissues. Reversibly binds oxygen through a pentacoordinated heme iron and enables its timely and efficient release as needed during periods of heightened demand. Depending on the oxidative conditions of tissues and cells, and in addition to its ability to bind oxygen, it also has a nitrite reductase activity whereby it regulates the production of bioactive nitric oxide. Under stress conditions, like hypoxia and anoxia, it also protects cells against reactive oxygen species thanks to its pseudoperoxidase activity. The sequence is that of Myoglobin (MB) from Kogia breviceps (Pygmy sperm whale).